We begin with the raw amino-acid sequence, 475 residues long: Ribulose bisphosphate carboxylase large chain (475 aa).

The propeptide occupies 1-2 (MS). The residue at position 3 (P3) is an N-acetylproline. N6,N6,N6-trimethyllysine is present on K14. N123 and T173 together coordinate substrate. The active-site Proton acceptor is the K175. K177 contributes to the substrate binding site. Residues K201, D203, and E204 each coordinate Mg(2+). K201 carries the post-translational modification N6-carboxylysine. The Proton acceptor role is filled by H294. Residues R295, H327, and S379 each coordinate substrate.

It belongs to the RuBisCO large chain family. Type I subfamily. In terms of assembly, heterohexadecamer of 8 large chains and 8 small chains; disulfide-linked. The disulfide link is formed within the large subunit homodimers. It depends on Mg(2+) as a cofactor. In terms of processing, the disulfide bond which can form in the large chain dimeric partners within the hexadecamer appears to be associated with oxidative stress and protein turnover.

The protein localises to the plastid. The protein resides in the chloroplast. The enzyme catalyses 2 (2R)-3-phosphoglycerate + 2 H(+) = D-ribulose 1,5-bisphosphate + CO2 + H2O. The catalysed reaction is D-ribulose 1,5-bisphosphate + O2 = 2-phosphoglycolate + (2R)-3-phosphoglycerate + 2 H(+). Its function is as follows. RuBisCO catalyzes two reactions: the carboxylation of D-ribulose 1,5-bisphosphate, the primary event in carbon dioxide fixation, as well as the oxidative fragmentation of the pentose substrate in the photorespiration process. Both reactions occur simultaneously and in competition at the same active site. The chain is Ribulose bisphosphate carboxylase large chain from Cerastium glomeratum (Sticky chickweed).